A 369-amino-acid polypeptide reads, in one-letter code: Molybdenum import ATP-binding protein ModC (369 aa).

The ABC transporter domain occupies threonine 3–serine 246. ATP is bound at residue glycine 44–threonine 51. The Mop domain occupies aspartate 305–glycine 369.

This sequence belongs to the ABC transporter superfamily. Molybdate importer (TC 3.A.1.8) family. As to quaternary structure, the complex is composed of two ATP-binding proteins (ModC), two transmembrane proteins (ModB) and a solute-binding protein (ModA).

The protein localises to the cell inner membrane. The enzyme catalyses molybdate(out) + ATP + H2O = molybdate(in) + ADP + phosphate + H(+). Its function is as follows. Part of the ABC transporter complex ModABC involved in molybdenum import. Responsible for energy coupling to the transport system. This Albidiferax ferrireducens (strain ATCC BAA-621 / DSM 15236 / T118) (Rhodoferax ferrireducens) protein is Molybdenum import ATP-binding protein ModC.